A 789-amino-acid polypeptide reads, in one-letter code: Disintegrin and metalloproteinase domain-containing protein 7 (789 aa).

The N-terminal stretch at Met1–Gly23 is a signal peptide. A propeptide spanning residues Val24 to Thr176 is cleaved from the precursor. Residues Val24 to Ser667 are Extracellular-facing. N-linked (GlcNAc...) asparagine glycosylation is found at Asn84, Asn167, and Asn174. The Peptidase M12B domain maps to Lys199–Pro393. 4 cysteine pairs are disulfide-bonded: Cys310/Cys388, Cys350/Cys372, Cys352/Cys357, and Cys459/Cys479. The 87-residue stretch at Tyr401–Asn487 folds into the Disintegrin domain. Residues Asn583, Asn628, and Asn664 are each glycosylated (N-linked (GlcNAc...) asparagine). Residues Val668–Ile689 traverse the membrane as a helical segment. Residues Arg690–Gly789 are Cytoplasmic-facing. Positions Arg764 to Gly789 are disordered. Positions Thr772 to Gly789 are enriched in polar residues.

Interacts with ITM2B in sperm; the interaction increases following capacitation. Interacts with HSPA5 and CANX. As to expression, expressed in both the head and tails of sperm (at protein level). Expressed in the epididymis (at protein level). Abundantly expressed in the apical region of the proximal caput epididymal epithelium, with decreasing expression in the mid and distal caput epididymal epithelium.

The protein localises to the membrane. In terms of biological role, required for normal male fertility via maintenance of epithelial cell morphology in the caput epididymis and subsequently correct epididymis lumen structure required for sperm development. Plays a role in sperm motility, flagella morphology and tyrosine phosphorylation during sperm capacitance. Plays a role in normal expression levels of HSPA5, ITM2B and ADAM2 in sperm both prior to and post-capacitation. This is a non catalytic metalloprotease-like protein. In Mus musculus (Mouse), this protein is Disintegrin and metalloproteinase domain-containing protein 7.